A 416-amino-acid polypeptide reads, in one-letter code: UDP-N-acetylglucosamine 1-carboxyvinyltransferase (416 aa).

K22–N23 contributes to the phosphoenolpyruvate binding site. A UDP-N-acetyl-alpha-D-glucosamine-binding site is contributed by R92. C116 functions as the Proton donor in the catalytic mechanism. A 2-(S-cysteinyl)pyruvic acid O-phosphothioketal modification is found at C116. UDP-N-acetyl-alpha-D-glucosamine is bound by residues R121–Q125, D304, and I326.

This sequence belongs to the EPSP synthase family. MurA subfamily.

It localises to the cytoplasm. It catalyses the reaction phosphoenolpyruvate + UDP-N-acetyl-alpha-D-glucosamine = UDP-N-acetyl-3-O-(1-carboxyvinyl)-alpha-D-glucosamine + phosphate. The protein operates within cell wall biogenesis; peptidoglycan biosynthesis. In terms of biological role, cell wall formation. Adds enolpyruvyl to UDP-N-acetylglucosamine. In Cupriavidus metallidurans (strain ATCC 43123 / DSM 2839 / NBRC 102507 / CH34) (Ralstonia metallidurans), this protein is UDP-N-acetylglucosamine 1-carboxyvinyltransferase.